The chain runs to 91 residues: Transcription factor znf27 (91 aa).

The protein localises to the nucleus. In terms of biological role, transcription factor; part of the gene cluster 27 that mediates the biosynthesis of asparasone A, a sclerotium-specific anthraquinone pigment important for sclerotial survival. Controls the expression of the non-reducing polyketide synthase (NRPKS) pks27. This chain is Transcription factor znf27, found in Aspergillus flavus (strain ATCC 200026 / FGSC A1120 / IAM 13836 / NRRL 3357 / JCM 12722 / SRRC 167).